A 247-amino-acid chain; its full sequence is Chymase (247 aa).

The first 19 residues, 1–19 (MNLHALCLLLLLLGSSTKA), serve as a signal peptide directing secretion. A propeptide spans 20 to 21 (GE) (activation peptide). The Peptidase S1 domain maps to 22 to 245 (IIGGTECIPH…YRPWINKILR (224 aa)). Cysteines 51 and 67 form a disulfide. His-66 serves as the catalytic Charge relay system. Asn-80 is a glycosylation site (N-linked (GlcNAc...) asparagine). Asp-110 (charge relay system) is an active-site residue. 2 cysteine pairs are disulfide-bonded: Cys-144–Cys-209 and Cys-175–Cys-188. Catalysis depends on Ser-203, which acts as the Charge relay system.

The protein belongs to the peptidase S1 family. Granzyme subfamily. As to expression, mast cells.

It is found in the secreted. Its subcellular location is the cytoplasmic granule. It carries out the reaction Preferential cleavage: Phe-|-Xaa &gt; Tyr-|-Xaa &gt; Trp-|-Xaa &gt; Leu-|-Xaa.. Major secreted protease of mast cells with suspected roles in vasoactive peptide generation, extracellular matrix degradation, and regulation of gland secretion. The sequence is that of Chymase (Cma1) from Rattus norvegicus (Rat).